Consider the following 74-residue polypeptide: Ferredoxin-like protein in nif region (74 aa).

One can recognise a 4Fe-4S ferredoxin-type domain in the interval 2–30 (PFKIIASQCTSCSACEPLCPNVAISEKGG). Residues Cys-10, Cys-13, Cys-16, Cys-20, Cys-39, Cys-51, and Cys-55 each contribute to the [4Fe-4S] cluster site.

The cofactor is [4Fe-4S] cluster.

The polypeptide is Ferredoxin-like protein in nif region (frxA) (Bradyrhizobium diazoefficiens (strain JCM 10833 / BCRC 13528 / IAM 13628 / NBRC 14792 / USDA 110)).